Consider the following 282-residue polypeptide: ATP phosphoribosyltransferase (282 aa).

It belongs to the ATP phosphoribosyltransferase family. Long subfamily. Requires Mg(2+) as cofactor.

The protein localises to the cytoplasm. It catalyses the reaction 1-(5-phospho-beta-D-ribosyl)-ATP + diphosphate = 5-phospho-alpha-D-ribose 1-diphosphate + ATP. It participates in amino-acid biosynthesis; L-histidine biosynthesis; L-histidine from 5-phospho-alpha-D-ribose 1-diphosphate: step 1/9. With respect to regulation, feedback inhibited by histidine. Its function is as follows. Catalyzes the condensation of ATP and 5-phosphoribose 1-diphosphate to form N'-(5'-phosphoribosyl)-ATP (PR-ATP). Has a crucial role in the pathway because the rate of histidine biosynthesis seems to be controlled primarily by regulation of HisG enzymatic activity. The sequence is that of ATP phosphoribosyltransferase from Pyrobaculum calidifontis (strain DSM 21063 / JCM 11548 / VA1).